Consider the following 316-residue polypeptide: Pantothenate kinase (316 aa).

Position 95–102 (Gly95–Ser102) interacts with ATP.

This sequence belongs to the prokaryotic pantothenate kinase family.

The protein resides in the cytoplasm. The enzyme catalyses (R)-pantothenate + ATP = (R)-4'-phosphopantothenate + ADP + H(+). It functions in the pathway cofactor biosynthesis; coenzyme A biosynthesis; CoA from (R)-pantothenate: step 1/5. The sequence is that of Pantothenate kinase from Shewanella oneidensis (strain ATCC 700550 / JCM 31522 / CIP 106686 / LMG 19005 / NCIMB 14063 / MR-1).